The primary structure comprises 319 residues: Succinoglycan biosynthesis protein ExoW (319 aa).

This sequence belongs to the glycosyltransferase 2 family.

The protein localises to the cell membrane. It functions in the pathway glycan metabolism; exopolysaccharide biosynthesis. Its function is as follows. Glycosyltransferase required for the synthesis of succinoglycan (EPS I). Needed for the addition of the seventh sugar (glucose), catalyzes the formation of a beta-1,3 linkage between the seventh and eighth sugar. The protein is Succinoglycan biosynthesis protein ExoW (exoW) of Rhizobium meliloti (strain 1021) (Ensifer meliloti).